A 318-amino-acid chain; its full sequence is 1-aminocyclopropane-1-carboxylate oxidase (318 aa).

The region spanning Pro-151–Pro-251 is the Fe2OG dioxygenase domain. Residues His-175, Asp-177, and His-232 each coordinate Fe cation.

The protein belongs to the iron/ascorbate-dependent oxidoreductase family. It depends on Fe cation as a cofactor.

It carries out the reaction 1-aminocyclopropane-1-carboxylate + L-ascorbate + O2 = ethene + L-dehydroascorbate + hydrogen cyanide + CO2 + 2 H2O. The protein operates within alkene biosynthesis; ethylene biosynthesis via S-adenosyl-L-methionine; ethylene from S-adenosyl-L-methionine: step 2/2. This chain is 1-aminocyclopropane-1-carboxylate oxidase (ACO), found in Dendrobium crumenatum (Tropical pigeon orchid).